The primary structure comprises 269 residues: Energy-coupling factor transporter ATP-binding protein EcfA1 (269 aa).

The ABC transporter domain maps to 8–242; sequence IVFKNVSFQY…AEELTRIGLD (235 aa). 42-49 serves as a coordination point for ATP; sequence GHNGSGKS.

Belongs to the ABC transporter superfamily. Energy-coupling factor EcfA family. As to quaternary structure, forms a stable energy-coupling factor (ECF) transporter complex composed of 2 membrane-embedded substrate-binding proteins (S component), 2 ATP-binding proteins (A component) and 2 transmembrane proteins (T component).

Its subcellular location is the cell membrane. Functionally, ATP-binding (A) component of a common energy-coupling factor (ECF) ABC-transporter complex. Unlike classic ABC transporters this ECF transporter provides the energy necessary to transport a number of different substrates. The chain is Energy-coupling factor transporter ATP-binding protein EcfA1 from Staphylococcus aureus (strain Mu50 / ATCC 700699).